Consider the following 973-residue polypeptide: UvrABC system protein A (973 aa).

Glycine 34–serine 41 is an ATP binding site. ABC transporter domains are found at residues tryptophan 331–leucine 609 and proline 629–lysine 958. Glycine 662–serine 669 contacts ATP. The C4-type zinc-finger motif lies at cysteine 761–cysteine 787.

The protein belongs to the ABC transporter superfamily. UvrA family. In terms of assembly, forms a heterotetramer with UvrB during the search for lesions.

Its subcellular location is the cytoplasm. Functionally, the UvrABC repair system catalyzes the recognition and processing of DNA lesions. UvrA is an ATPase and a DNA-binding protein. A damage recognition complex composed of 2 UvrA and 2 UvrB subunits scans DNA for abnormalities. When the presence of a lesion has been verified by UvrB, the UvrA molecules dissociate. The sequence is that of UvrABC system protein A from Agrobacterium fabrum (strain C58 / ATCC 33970) (Agrobacterium tumefaciens (strain C58)).